Here is a 449-residue protein sequence, read N- to C-terminus: PGL/p-HBAD biosynthesis rhamnosyltransferase (449 aa).

The protein belongs to the glycosyltransferase 28 family.

Catalyzes the transfer of the first rhamnosyl residue on p-hydroxybenzoic acid or phenolphthiocerol derivatives to form, after O-methylation at position 2 of the sugar unit, mono-O-methyl-glycosyl-p-hydroxybenzoic acid derivative (p-HBAD I) and 2-O-methyl-rhamnosyl-phenolphthiocerol dimycocerosate (also called mycoside B) during p-hydroxybenzoic acid derivatives (p-HBAD) and glycosylated phenolphthiocerol dimycocerosates (PGL) biosynthesis. The chain is PGL/p-HBAD biosynthesis rhamnosyltransferase from Mycobacterium bovis (strain BCG / Pasteur 1173P2).